The primary structure comprises 616 residues: Telomeric repeat-binding factor 2-interacting protein 1 (616 aa).

The region spanning 15 to 98 is the BRCT domain; it reads FLDPGGQSMR…QQLDPNDYAI (84 aa). The Myb-like domain occupies 112–169; it reads NQGSGRLGYSSEEDAAILKFIEKRQQDAKGNLVWKEMEKRHVTEHSWQSMKDRFLKHL. Residues 174–518 form a disordered region; the sequence is ADKPTKKSPI…CSHIRETPEE (345 aa). Low complexity predominate over residues 232-245; that stretch reads PERASSPPEEPQAA. Polar residues predominate over residues 246 to 255; it reads GQPSQASSND. 2 stretches are compositionally biased toward basic and acidic residues: residues 271–288 and 344–358; these read ENPRLDEDAPDASNEHSS and RSSRLEENPDRRDIP. Composition is skewed to polar residues over residues 363-382 and 397-415; these read EQSSPNKSQMTSKISTSDSG and NANSSPSKTRQTNSEASTP. Residues 431–444 are compositionally biased toward acidic residues; it reads EDSDVMDDSEECEN. Over residues 468–480 the composition is skewed to basic and acidic residues; that stretch reads REPESQAEHHEET. The Nuclear localization signal signature appears at 597 to 613; it reads SKFGEEEVTRRKSFLAT.

Belongs to the RAP1 family. In terms of assembly, homodimer. Component of the shelterin complex (telosome). Interacts with terf2; the interaction is direct.

Its subcellular location is the nucleus. The protein resides in the chromosome. It is found in the telomere. Functionally, acts both as a regulator of telomere function and as a transcription regulator. Involved in the regulation of telomere length and protection as a component of the shelterin complex (telosome). Does not bind DNA directly: recruited to telomeric double-stranded 5'-TTAGGG-3' repeats via its interaction with terf2. Independently of its function in telomeres, also acts as a transcription regulator: recruited to extratelomeric 5'-TTAGGG-3' sites via its association with terf2 or other factors, and regulates gene expression. The protein is Telomeric repeat-binding factor 2-interacting protein 1 (terf2ip) of Danio rerio (Zebrafish).